Consider the following 134-residue polypeptide: Small ribosomal subunit protein bS6 (134 aa).

It belongs to the bacterial ribosomal protein bS6 family.

In terms of biological role, binds together with bS18 to 16S ribosomal RNA. The polypeptide is Small ribosomal subunit protein bS6 (Pelodictyon phaeoclathratiforme (strain DSM 5477 / BU-1)).